The sequence spans 375 residues: Methylthioribose-1-phosphate isomerase (375 aa).

Catalysis depends on Asp-257, which acts as the Proton donor.

The protein belongs to the eIF-2B alpha/beta/delta subunits family. MtnA subfamily.

The protein localises to the cytoplasm. The protein resides in the nucleus. It catalyses the reaction 5-(methylsulfanyl)-alpha-D-ribose 1-phosphate = 5-(methylsulfanyl)-D-ribulose 1-phosphate. Its pathway is amino-acid biosynthesis; L-methionine biosynthesis via salvage pathway; L-methionine from S-methyl-5-thio-alpha-D-ribose 1-phosphate: step 1/6. In terms of biological role, catalyzes the interconversion of methylthioribose-1-phosphate (MTR-1-P) into methylthioribulose-1-phosphate (MTRu-1-P). The sequence is that of Methylthioribose-1-phosphate isomerase from Leishmania infantum.